Here is a 443-residue protein sequence, read N- to C-terminus: Probable D-serine dehydratase (443 aa).

Lys-116 carries the N6-(pyridoxal phosphate)lysine modification.

The protein belongs to the serine/threonine dehydratase family. DsdA subfamily. Requires pyridoxal 5'-phosphate as cofactor.

The enzyme catalyses D-serine = pyruvate + NH4(+). The chain is Probable D-serine dehydratase from Bacillus cereus (strain AH187).